Consider the following 240-residue polypeptide: 6-phosphogluconolactonase (240 aa).

This sequence belongs to the glucosamine/galactosamine-6-phosphate isomerase family. 6-phosphogluconolactonase subfamily.

It carries out the reaction 6-phospho-D-glucono-1,5-lactone + H2O = 6-phospho-D-gluconate + H(+). Its pathway is carbohydrate degradation; pentose phosphate pathway; D-ribulose 5-phosphate from D-glucose 6-phosphate (oxidative stage): step 2/3. Functionally, hydrolysis of 6-phosphogluconolactone to 6-phosphogluconate. This Synechocystis sp. (strain ATCC 27184 / PCC 6803 / Kazusa) protein is 6-phosphogluconolactonase (pgl).